Reading from the N-terminus, the 201-residue chain is 3-isopropylmalate dehydratase small subunit (201 aa).

It belongs to the LeuD family. LeuD type 1 subfamily. As to quaternary structure, heterodimer of LeuC and LeuD.

It carries out the reaction (2R,3S)-3-isopropylmalate = (2S)-2-isopropylmalate. Its pathway is amino-acid biosynthesis; L-leucine biosynthesis; L-leucine from 3-methyl-2-oxobutanoate: step 2/4. Catalyzes the isomerization between 2-isopropylmalate and 3-isopropylmalate, via the formation of 2-isopropylmaleate. In Shewanella sp. (strain MR-7), this protein is 3-isopropylmalate dehydratase small subunit.